A 408-amino-acid chain; its full sequence is Tryptophan--tRNA ligase, chloroplastic/mitochondrial (408 aa).

The N-terminal 52 residues, 1-52 (MGHATSLSHFLILSSSRFSRLGSLTRLLSKPTSLSGSFSSISVTGQGFRCCC), are a transit peptide targeting the chloroplast and mitochondrion. Residue S53 is modified to N-acetylserine. ATP contacts are provided by residues Q72 and 78–81 (HLGN). Positions 73 to 81 (PTGSVHLGN) match the 'HIGH' region motif. D197 lines the L-tryptophan pocket. ATP contacts are provided by residues 209–211 (GED), V260, 269–273 (KMSKS), and K272. A 'KMSKS' region motif is present at residues 269–273 (KMSKS).

Belongs to the class-I aminoacyl-tRNA synthetase family.

It localises to the plastid. The protein resides in the chloroplast. The protein localises to the mitochondrion. The enzyme catalyses tRNA(Trp) + L-tryptophan + ATP = L-tryptophyl-tRNA(Trp) + AMP + diphosphate + H(+). The chain is Tryptophan--tRNA ligase, chloroplastic/mitochondrial from Arabidopsis thaliana (Mouse-ear cress).